The chain runs to 198 residues: Putative protein-methionine-sulfoxide reductase subunit YedZ1 (198 aa).

4 consecutive transmembrane segments (helical) span residues 12–32 (WLRV…MSGW), 63–83 (FAAM…NIFS), 124–144 (AAYL…LVLW), and 167–187 (FIGM…VALV).

It belongs to the HupC/HyaC/HydC family.

The protein resides in the cell inner membrane. Part of the YedY1-YedZ1 system that may repair oxidized proteins containing methionine sulfoxide residues (Met-O). This chain is Putative protein-methionine-sulfoxide reductase subunit YedZ1, found in Azospira oryzae (strain ATCC BAA-33 / DSM 13638 / PS) (Dechlorosoma suillum).